A 406-amino-acid polypeptide reads, in one-letter code: Argininosuccinate synthase (406 aa).

ATP-binding positions include 11–19 and Ala38; that span reads AYSGGLDTS. 2 residues coordinate L-citrulline: Tyr91 and Ser96. Position 121 (Gly121) interacts with ATP. Positions 123, 127, and 128 each coordinate L-aspartate. L-citrulline is bound at residue Asn127. Positions 131, 181, 190, 266, and 278 each coordinate L-citrulline.

The protein belongs to the argininosuccinate synthase family. Type 1 subfamily. As to quaternary structure, homotetramer.

Its subcellular location is the cytoplasm. The enzyme catalyses L-citrulline + L-aspartate + ATP = 2-(N(omega)-L-arginino)succinate + AMP + diphosphate + H(+). It participates in amino-acid biosynthesis; L-arginine biosynthesis; L-arginine from L-ornithine and carbamoyl phosphate: step 2/3. The sequence is that of Argininosuccinate synthase from Campylobacter jejuni (strain RM1221).